We begin with the raw amino-acid sequence, 322 residues long: Putative small RNA degrading nuclease 4 (322 aa).

The region spanning 75 to 213 (MLALDCEMVL…HDAAAAMKLA (139 aa)) is the Exonuclease domain.

The protein belongs to the REXO1/REXO3 family.

It localises to the nucleus. Putative 3'-5' exonuclease degrading single-stranded small RNAs. The sequence is that of Putative small RNA degrading nuclease 4 (SDN4) from Arabidopsis thaliana (Mouse-ear cress).